A 380-amino-acid polypeptide reads, in one-letter code: Cytochrome b (380 aa).

The next 4 membrane-spanning stretches (helical) occupy residues 34–54 (FGSL…FLAM), 78–99 (WLVR…YLHI), 114–134 (WNIG…GYVL), and 179–199 (FFAF…LHLL). Residues histidine 84 and histidine 98 each coordinate heme b. The heme b site is built by histidine 183 and histidine 197. Residue histidine 202 participates in a ubiquinone binding. 4 helical membrane-spanning segments follow: residues 227–247 (YKDT…SMLS), 289–309 (LGGV…PMIH), 321–341 (MTQF…WIGG), and 348–368 (FIEI…IFMP).

Belongs to the cytochrome b family. As to quaternary structure, the cytochrome bc1 complex contains 3 respiratory subunits (MT-CYB, CYC1 and UQCRFS1), 2 core proteins (UQCRC1 and UQCRC2) and probably 6 low-molecular weight proteins. It depends on heme b as a cofactor.

It is found in the mitochondrion inner membrane. Functionally, component of the ubiquinol-cytochrome c reductase complex (complex III or cytochrome b-c1 complex) that is part of the mitochondrial respiratory chain. The b-c1 complex mediates electron transfer from ubiquinol to cytochrome c. Contributes to the generation of a proton gradient across the mitochondrial membrane that is then used for ATP synthesis. The sequence is that of Cytochrome b (mt-cyb) from Ranodon sibiricus (Siberian salamander).